The sequence spans 110 residues: Large ribosomal subunit protein uL22 (110 aa).

The protein belongs to the universal ribosomal protein uL22 family. Part of the 50S ribosomal subunit.

This protein binds specifically to 23S rRNA; its binding is stimulated by other ribosomal proteins, e.g. L4, L17, and L20. It is important during the early stages of 50S assembly. It makes multiple contacts with different domains of the 23S rRNA in the assembled 50S subunit and ribosome. In terms of biological role, the globular domain of the protein is located near the polypeptide exit tunnel on the outside of the subunit, while an extended beta-hairpin is found that lines the wall of the exit tunnel in the center of the 70S ribosome. This Acidovorax ebreus (strain TPSY) (Diaphorobacter sp. (strain TPSY)) protein is Large ribosomal subunit protein uL22.